Reading from the N-terminus, the 70-residue chain is uncharacterized protein (70 aa).

2 helical membrane passes run 13-33 and 39-59; these read YYAF…LLGF and QTYA…GLII.

It localises to the cell membrane. This is an uncharacterized protein from Escherichia coli O6:H1 (strain CFT073 / ATCC 700928 / UPEC).